The chain runs to 708 residues: Nicastrin (708 aa).

The signal sequence occupies residues 1-27 (MATTRGGSGPDPGSRGLLLLSFSVVLA). At 28 to 668 (GLCGGNSVER…IFLIASKELE (641 aa)) the chain is on the lumenal side. Residues asparagine 44, asparagine 54, and asparagine 128 are each glycosylated (N-linked (GlcNAc...) asparagine). A disulfide bridge connects residues cysteine 49 and cysteine 61. Cysteine 139 and cysteine 158 are disulfide-bonded. Residues asparagine 186 and asparagine 203 are each glycosylated (N-linked (GlcNAc...) asparagine). 2 disulfides stabilise this stretch: cysteine 194/cysteine 212 and cysteine 229/cysteine 247. N-linked (GlcNAc...) asparagine glycosylation is found at asparagine 263, asparagine 386, asparagine 434, asparagine 463, asparagine 505, asparagine 529, asparagine 561, asparagine 572, asparagine 579, asparagine 593, and asparagine 611. Cysteine 585 and cysteine 619 are oxidised to a cystine. The helical transmembrane segment at 669-689 (FITLIVGFSTLVFSLIVTYCI) threads the bilayer. The Cytoplasmic segment spans residues 690 to 708 (NAKADVLFVAPREPGAVSY).

It belongs to the nicastrin family. As to quaternary structure, component of the gamma-secretase complex. The functional gamma-secretase complex is composed of at least four polypeptides: a presenilin homodimer (PSEN1 or PSEN2), nicastrin (NCSTN), APH1 (APH1A or APH1B) and PEN2. Binds to proteolytic processed C-terminal fragments C83 and C99 of the amyloid precursor protein (APP). Interacts with PSEN1 and PSEN2. In terms of processing, N-glycosylated.

The protein localises to the membrane. Its subcellular location is the cytoplasmic vesicle membrane. It localises to the melanosome. Essential subunit of the gamma-secretase complex, an endoprotease complex that catalyzes the intramembrane cleavage of integral membrane proteins such as Notch receptors and APP (amyloid-beta precursor protein). The gamma-secretase complex plays a role in Notch and Wnt signaling cascades and regulation of downstream processes via its role in processing key regulatory proteins, and by regulating cytosolic CTNNB1 levels. This Mus musculus (Mouse) protein is Nicastrin (Ncstn).